The following is a 446-amino-acid chain: Histidine--tRNA ligase (446 aa).

Belongs to the class-II aminoacyl-tRNA synthetase family. In terms of assembly, homodimer.

The protein localises to the cytoplasm. The catalysed reaction is tRNA(His) + L-histidine + ATP = L-histidyl-tRNA(His) + AMP + diphosphate + H(+). This is Histidine--tRNA ligase from Burkholderia pseudomallei (strain 668).